A 273-amino-acid polypeptide reads, in one-letter code: MNNRVHQGHLARKRFGQNFLNDQFVIDSIVSAINPQKGQAMVEIGPGLAALTEPVGERLDQLTVIELDRDLAARLQTHPFLGPKLTIYQQDAMTFNFGELAEKMGQPLRVFGNLPYNISTPLMFHLFSYTDAIADMHFMLQKEVVNRLVAGPNSKAYGRLSVMAQYYCNVIPVLEVPPSAFTPPPKVDSAVVRLVPHATMPHPVKDVRVLSRITTEAFNQRRKTIRNSLGNLFSVEVLTGMGIDPAMRAENISVAQYCQMANYLAENAPFQES.

Positions 18, 20, 45, 66, 91, and 113 each coordinate S-adenosyl-L-methionine.

Belongs to the class I-like SAM-binding methyltransferase superfamily. rRNA adenine N(6)-methyltransferase family. RsmA subfamily.

The protein resides in the cytoplasm. It carries out the reaction adenosine(1518)/adenosine(1519) in 16S rRNA + 4 S-adenosyl-L-methionine = N(6)-dimethyladenosine(1518)/N(6)-dimethyladenosine(1519) in 16S rRNA + 4 S-adenosyl-L-homocysteine + 4 H(+). In terms of biological role, specifically dimethylates two adjacent adenosines (A1518 and A1519) in the loop of a conserved hairpin near the 3'-end of 16S rRNA in the 30S particle. May play a critical role in biogenesis of 30S subunits. The protein is Ribosomal RNA small subunit methyltransferase A of Escherichia coli O157:H7.